Consider the following 257-residue polypeptide: Thiazole synthase (257 aa).

Catalysis depends on K96, which acts as the Schiff-base intermediate with DXP. 1-deoxy-D-xylulose 5-phosphate is bound by residues G157, 184-185 (AG), and 206-207 (NT).

This sequence belongs to the ThiG family. Homotetramer. Forms heterodimers with either ThiH or ThiS.

The protein localises to the cytoplasm. It catalyses the reaction [ThiS sulfur-carrier protein]-C-terminal-Gly-aminoethanethioate + 2-iminoacetate + 1-deoxy-D-xylulose 5-phosphate = [ThiS sulfur-carrier protein]-C-terminal Gly-Gly + 2-[(2R,5Z)-2-carboxy-4-methylthiazol-5(2H)-ylidene]ethyl phosphate + 2 H2O + H(+). The protein operates within cofactor biosynthesis; thiamine diphosphate biosynthesis. In terms of biological role, catalyzes the rearrangement of 1-deoxy-D-xylulose 5-phosphate (DXP) to produce the thiazole phosphate moiety of thiamine. Sulfur is provided by the thiocarboxylate moiety of the carrier protein ThiS. In vitro, sulfur can be provided by H(2)S. The chain is Thiazole synthase from Rhizobium meliloti (strain 1021) (Ensifer meliloti).